We begin with the raw amino-acid sequence, 341 residues long: L-threonine 3-dehydrogenase (341 aa).

A Zn(2+)-binding site is contributed by cysteine 38. Catalysis depends on charge relay system residues threonine 40 and histidine 43. The Zn(2+) site is built by histidine 63, glutamate 64, cysteine 93, cysteine 96, cysteine 99, and cysteine 107. Residues isoleucine 175, aspartate 195, arginine 200, 262–264, and 286–287 contribute to the NAD(+) site; these read LGI and IY.

The protein belongs to the zinc-containing alcohol dehydrogenase family. In terms of assembly, homotetramer. Zn(2+) is required as a cofactor.

The protein resides in the cytoplasm. It carries out the reaction L-threonine + NAD(+) = (2S)-2-amino-3-oxobutanoate + NADH + H(+). It functions in the pathway amino-acid degradation; L-threonine degradation via oxydo-reductase pathway; glycine from L-threonine: step 1/2. Functionally, catalyzes the NAD(+)-dependent oxidation of L-threonine to 2-amino-3-ketobutyrate. In Shewanella woodyi (strain ATCC 51908 / MS32), this protein is L-threonine 3-dehydrogenase.